Here is a 136-residue protein sequence, read N- to C-terminus: Acidic phospholipase A2 EC-I (136 aa).

Positions 1–16 (MKTLWIVAVWLIAVEG) are cleaved as a signal peptide. 7 disulfide bridges follow: C42–C129, C44–C60, C59–C111, C65–C136, C66–C104, C73–C97, and C91–C102. Ca(2+) contacts are provided by Y43, G45, and G47. The active site involves H63. Residue D64 coordinates Ca(2+). D105 is an active-site residue. The segment at 112–133 (LGENVNTYDKKYKSYEDCTEEV) is may be responsible for inhibition of the platelet-aggregation activity.

It belongs to the phospholipase A2 family. Group II subfamily. D49 sub-subfamily. In terms of assembly, monomer. The cofactor is Ca(2+). In terms of tissue distribution, expressed by the venom gland.

It localises to the secreted. It catalyses the reaction a 1,2-diacyl-sn-glycero-3-phosphocholine + H2O = a 1-acyl-sn-glycero-3-phosphocholine + a fatty acid + H(+). In terms of biological role, snake venom phospholipase A2 (PLA2) that inhibits human platelet aggregation induced by ADP, collagen and epinephrin (possibly by binding the platelet receptor alpha-IIb/beta-III) and induces mild edema in the foot pads of mice. PLA2 catalyzes the calcium-dependent hydrolysis of the 2-acyl groups in 3-sn-phosphoglycerides. The chain is Acidic phospholipase A2 EC-I from Echis carinatus (Saw-scaled viper).